Consider the following 24-residue polypeptide: MTRSLKKNPFVANHLLNKIDKLNT.

Belongs to the universal ribosomal protein uS19 family.

It is found in the plastid. Its subcellular location is the chloroplast. Its function is as follows. Protein S19 forms a complex with S13 that binds strongly to the 16S ribosomal RNA. This is Small ribosomal subunit protein uS19c (rps19) from Petunia hybrida (Petunia).